We begin with the raw amino-acid sequence, 848 residues long: Adenylate cyclase (848 aa).

Residues 1-535 (MYLYIETLKQ…DISHHFPLRL (535 aa)) are catalytic. The segment at 541–848 (KALYSPCEIR…SQPAQQFQLH (308 aa)) is regulatory.

The protein belongs to the adenylyl cyclase class-1 family.

The protein localises to the cytoplasm. It carries out the reaction ATP = 3',5'-cyclic AMP + diphosphate. With respect to regulation, the regulatory domain is involved in the regulation of cyclase activity by the carbon source. The chain is Adenylate cyclase (cya) from Yersinia intermedia.